The primary structure comprises 38 residues: MQKFLTTAPVVAAIWFTLTAGILIEWNRFFPDLLFHPM.

Residues 4–24 traverse the membrane as a helical segment; that stretch reads FLTTAPVVAAIWFTLTAGILI.

It belongs to the PsaJ family.

It is found in the cellular thylakoid membrane. May help in the organization of the PsaE and PsaF subunits. The polypeptide is Photosystem I reaction center subunit IX (Parasynechococcus marenigrum (strain WH8102)).